The chain runs to 423 residues: D-tagatose-1,6-bisphosphate aldolase subunit GatZ (423 aa).

Belongs to the GatZ/KbaZ family. GatZ subfamily. In terms of assembly, forms a complex with GatY.

It functions in the pathway carbohydrate metabolism; D-tagatose 6-phosphate degradation; D-glyceraldehyde 3-phosphate and glycerone phosphate from D-tagatose 6-phosphate: step 2/2. In terms of biological role, component of the tagatose-1,6-bisphosphate aldolase GatYZ that is required for full activity and stability of the Y subunit. Could have a chaperone-like function for the proper and stable folding of GatY. When expressed alone, GatZ does not show any aldolase activity. Is involved in the catabolism of galactitol. The sequence is that of D-tagatose-1,6-bisphosphate aldolase subunit GatZ from Salmonella gallinarum (strain 287/91 / NCTC 13346).